Reading from the N-terminus, the 134-residue chain is Small ribosomal subunit protein uS11 (134 aa).

It belongs to the universal ribosomal protein uS11 family. As to quaternary structure, part of the 30S ribosomal subunit. Interacts with proteins S7 and S18. Binds to IF-3.

Located on the platform of the 30S subunit, it bridges several disparate RNA helices of the 16S rRNA. Forms part of the Shine-Dalgarno cleft in the 70S ribosome. This is Small ribosomal subunit protein uS11 from Paraburkholderia xenovorans (strain LB400).